The primary structure comprises 142 residues: Gonadotropin subunit beta-2 (142 aa).

An N-terminal signal peptide occupies residues 1–23 (MLGLHVGTLISLFLCILLEPVEG). Disulfide bonds link C29-C77, C43-C92, C46-C130, C54-C108, C58-C110, and C113-C120. N33 carries an N-linked (GlcNAc...) asparagine glycan.

This sequence belongs to the glycoprotein hormones subunit beta family. Heterodimer of an alpha and a beta chain.

It is found in the secreted. Involved in gametogenesis and steroidogenesis. This is Gonadotropin subunit beta-2 (cgbb) from Oncorhynchus keta (Chum salmon).